The sequence spans 333 residues: 2-oxoglutarate-dependent dioxygenase ucsF (333 aa).

The 123-residue stretch at 174–296 (NASELRLNHY…RYSIAYLCKA (123 aa)) folds into the Fe2OG dioxygenase domain. The Fe cation site is built by His202, Asp204, and His264. Residue Arg287 participates in 2-oxoglutarate binding.

The protein belongs to the iron/ascorbate-dependent oxidoreductase family. The cofactor is Fe(2+).

The protein operates within mycotoxin biosynthesis. Its function is as follows. 2-oxoglutarate-dependent dioxygenase; part of the gene cluster that mediates the biosynthesis of UCS1025A, a member of the pyrrolizidinone family that acts as a strong telomerase inhibitor and displays potent antibacterial and antitumor properties. These compounds share a hemiaminal-containing pyrrolizidinone core fused with a gamma-lactone, giving a furopyrrolizidine that is connected to a decalin fragment. The polyketide synthase module (PKS) of the PKS-NRPS ucsA is responsible for the synthesis of the polyketide backbone via the condensation of an acetyl-CoA starter unit with 6 malonyl-CoA units. The downstream nonribosomal peptide synthetase (NRPS) module then amidates the carboxyl end of the polyketide with a 2S,3S-methylproline derived from L-isoleucine by the 2-oxoglutarate-dependent dioxygenase ucsF which converts L-isoleucine to (4S,5S)-4-methylpyrroline-5-carboxylate that is further converted to 2S,3S-methylproline by the pyrroline-5-carboxylate reductase ucsG. Reductive release of the completed aminoacyl polyketide from the assembly line can form the 3-pyrrolin-2-one structure via an intramolecular Knoevenagel reaction. Because ucsA lacks a designated enoylreductase (ER) domain, the required activity is provided the enoyl reductase ucsL. This keto acyclic precursor is the substrate of the Diels-Alderase ucsH, that catalyzes the Diels-Alder cycloaddition. Oxidation of the 3S-methyl group to a carboxylate by the cytochrome P450 monooxygenase ucsK allows an oxa-Michael cyclization that might involve the reductase/dehydrogenase ucsI and which furnishes the furopyrrolizidine. The oxidase ucsJ likely plays a critical role in stereoselective reduction of the C5-C6 double bond to afford the required R-configured carboxylate group. Further enolization and oxidation at C5 by an unidentified enzyme affords the last intermediate that can undergo oxa-Michael cyclization to yield UCS1025A. The protein is 2-oxoglutarate-dependent dioxygenase ucsF of Acremonium sp.